Here is a 204-residue protein sequence, read N- to C-terminus: Somatotropin (204 aa).

The first 17 residues, 1 to 17 (MDRAILLLSVLSVGVSS), serve as a signal peptide directing secretion. Q18 carries the post-translational modification Pyrrolidone carboxylic acid. H35 contacts Zn(2+). C69 and C177 are oxidised to a cystine. E186 contributes to the Zn(2+) binding site. C194 and C202 are disulfide-bonded.

The protein belongs to the somatotropin/prolactin family.

The protein resides in the secreted. Functionally, growth hormone plays an important role in growth control and is involved in the regulation of several anabolic processes. Implicated as an osmoregulatory substance important for seawater adaptation. This Dicentrarchus labrax (European seabass) protein is Somatotropin (gh).